Here is a 141-residue protein sequence, read N- to C-terminus: MAVERTLSIIKPDAVAKNVIGQIYARFEAAGLKVVAARMAHLSRVEAENFYAIHRERPFFKDLVEFMISGPVMIQVLEGENAIARNRELMGATDPRKAEKGTIRADFAESIDANAVHGSDAPETAVVEIACFFPSLEIHSR.

Residues K11, F59, R87, T93, R104, and N114 each coordinate ATP. The Pros-phosphohistidine intermediate role is filled by H117.

Belongs to the NDK family. As to quaternary structure, homotetramer. Requires Mg(2+) as cofactor.

The protein resides in the cytoplasm. It catalyses the reaction a 2'-deoxyribonucleoside 5'-diphosphate + ATP = a 2'-deoxyribonucleoside 5'-triphosphate + ADP. The enzyme catalyses a ribonucleoside 5'-diphosphate + ATP = a ribonucleoside 5'-triphosphate + ADP. Functionally, major role in the synthesis of nucleoside triphosphates other than ATP. The ATP gamma phosphate is transferred to the NDP beta phosphate via a ping-pong mechanism, using a phosphorylated active-site intermediate. This is Nucleoside diphosphate kinase from Nitrosomonas europaea (strain ATCC 19718 / CIP 103999 / KCTC 2705 / NBRC 14298).